We begin with the raw amino-acid sequence, 767 residues long: Probable beta-D-xylosidase 7 (767 aa).

A signal peptide spans 1–19; it reads MAKQLLLLLLLFIVHGVES. An N-linked (GlcNAc...) asparagine glycan is attached at Asn100. Asp292 is an active-site residue. A glycan (N-linked (GlcNAc...) asparagine) is linked at Asn643.

The protein belongs to the glycosyl hydrolase 3 family.

It is found in the secreted. Its subcellular location is the extracellular space. It localises to the extracellular matrix. In Arabidopsis thaliana (Mouse-ear cress), this protein is Probable beta-D-xylosidase 7 (BXL7).